The following is a 69-amino-acid chain: Cytochrome b-c1 complex subunit 6-1, mitochondrial (69 aa).

2 disulfides stabilise this stretch: Cys-17-Cys-59 and Cys-31-Cys-45.

This sequence belongs to the UQCRH/QCR6 family. In terms of assembly, component of the ubiquinol-cytochrome c oxidoreductase (cytochrome b-c1 complex, complex III, CIII), a multisubunit enzyme composed of 10 subunits. The complex is composed of 3 respiratory subunits cytochrome b (MT-CYB), cytochrome c1 (CYC1-1 or CYC1-2) and Rieske protein (UCR1-1 or UCR1-2), 2 core protein subunits MPPalpha1 (or MPPalpha2) and MPPB, and 5 low-molecular weight protein subunits QCR7-1 (or QCR7-2), UCRQ-1 (or UCRQ-2), QCR9, UCRY and probably QCR6-1 (or QCR6-2). The complex exists as an obligatory dimer and forms supercomplexes (SCs) in the inner mitochondrial membrane with NADH-ubiquinone oxidoreductase (complex I, CI), resulting in different assemblies (supercomplexes SCI(1)III(2) and SCI(2)III(4)).

The protein localises to the mitochondrion inner membrane. In terms of biological role, component of the ubiquinol-cytochrome c oxidoreductase, a multisubunit transmembrane complex that is part of the mitochondrial electron transport chain which drives oxidative phosphorylation. The respiratory chain contains 3 multisubunit complexes succinate dehydrogenase (complex II, CII), ubiquinol-cytochrome c oxidoreductase (cytochrome b-c1 complex, complex III, CIII) and cytochrome c oxidase (complex IV, CIV), that cooperate to transfer electrons derived from NADH and succinate to molecular oxygen, creating an electrochemical gradient over the inner membrane that drives transmembrane transport and the ATP synthase. The cytochrome b-c1 complex catalyzes electron transfer from ubiquinol to cytochrome c, linking this redox reaction to translocation of protons across the mitochondrial inner membrane, with protons being carried across the membrane as hydrogens on the quinol. In the process called Q cycle, 2 protons are consumed from the matrix, 4 protons are released into the intermembrane space and 2 electrons are passed to cytochrome c. This is Cytochrome b-c1 complex subunit 6-1, mitochondrial (QCR6-1) from Arabidopsis thaliana (Mouse-ear cress).